Here is a 581-residue protein sequence, read N- to C-terminus: NADH-quinone oxidoreductase subunit C/D (581 aa).

Positions 1 to 172 are NADH dehydrogenase I subunit C; sequence MSATDLVSEL…PLFNMTAALF (172 aa). Residues 196-581 are NADH dehydrogenase I subunit D; the sequence is ELMILNYGPH…IDYVMSDVDR (386 aa).

It in the N-terminal section; belongs to the complex I 30 kDa subunit family. In the C-terminal section; belongs to the complex I 49 kDa subunit family. As to quaternary structure, NDH-1 is composed of 13 different subunits. Subunits NuoB, CD, E, F, and G constitute the peripheral sector of the complex.

The protein localises to the cell inner membrane. It carries out the reaction a quinone + NADH + 5 H(+)(in) = a quinol + NAD(+) + 4 H(+)(out). NDH-1 shuttles electrons from NADH, via FMN and iron-sulfur (Fe-S) centers, to quinones in the respiratory chain. The immediate electron acceptor for the enzyme in this species is believed to be ubiquinone. Couples the redox reaction to proton translocation (for every two electrons transferred, four hydrogen ions are translocated across the cytoplasmic membrane), and thus conserves the redox energy in a proton gradient. This is NADH-quinone oxidoreductase subunit C/D from Rhodopseudomonas palustris (strain HaA2).